The primary structure comprises 505 residues: UDP-N-acetylglucosamine diphosphorylase 1 (505 aa).

The span at 1-10 (MIEPSMEREN) shows a compositional bias: basic and acidic residues. The segment at 1-32 (MIEPSMERENGALTAATTTTTAVTSPPPMASS) is disordered. The span at 14–24 (TAATTTTTAVT) shows a compositional bias: low complexity. Residues 134-137 (LSGG) carry the Substrate binding motif. Residue asparagine 253 participates in substrate binding. The Substrate binding motif lies at 335 to 336 (EY). Lysine 432 serves as a coordination point for substrate.

Belongs to the UDPGP type 1 family. In terms of assembly, monomer. Requires Mg(2+) as cofactor. Mn(2+) is required as a cofactor. Expressed in root tips, stipules and mature pollen grains.

It catalyses the reaction N-acetyl-alpha-D-glucosamine 1-phosphate + UTP + H(+) = UDP-N-acetyl-alpha-D-glucosamine + diphosphate. It carries out the reaction N-acetyl-alpha-D-galactosamine 1-phosphate + UTP + H(+) = UDP-N-acetyl-alpha-D-galactosamine + diphosphate. It participates in nucleotide-sugar biosynthesis; UDP-N-acetyl-alpha-D-glucosamine biosynthesis; UDP-N-acetyl-alpha-D-glucosamine from N-acetyl-alpha-D-glucosamine 1-phosphate: step 1/1. Its activity is regulated as follows. Inhibited by hygromycin and streptomycin, but not by gentamycin or kanamycin. In terms of biological role, uridylyltransferase involved in the biosynthesis of UDP-glucosamine, an essential precursor for glycoprotein and glycolipid synthesis. Can use both UDP-glucosamine and the 4-epimer UDP-galactosamine as substrates, but no other sugars or NTPs. Acts redundantly with GLCNAC1PUT2. Required for gametogenesis and embryo development. The chain is UDP-N-acetylglucosamine diphosphorylase 1 (GLCNAC1PUT1) from Arabidopsis thaliana (Mouse-ear cress).